The primary structure comprises 574 residues: Myo-inositol transporter FST1 (574 aa).

At 1 to 76 the chain is on the cytoplasmic side; the sequence is MGKSRQNSTT…VQFANPKHFT (76 aa). The chain crosses the membrane as a helical span at residues 77 to 97; it reads WLLVAFASMGGLLSGLDQSLI. Residues 98–115 lie on the Extracellular side of the membrane; the sequence is SGANLFLPDDLGLTEHEN. The helical transmembrane segment at 116–136 threads the bilayer; the sequence is SLVNSGMPLGAVGGALLLSPA. Topologically, residues 137–143 are cytoplasmic; that stretch reads NEYFGRK. Residues 144–164 form a helical membrane-spanning segment; it reads GAIIISIILYTIGAALEAGSI. The Extracellular portion of the chain corresponds to 165-173; sequence NFGMIVSSR. Residues 174 to 194 form a helical membrane-spanning segment; that stretch reads VILGLGVGLEGGTVPVYVAET. Topologically, residues 195-205 are cytoplasmic; it reads VERRIRGNLVS. The chain crosses the membrane as a helical span at residues 206-226; the sequence is LYQFNIALGEVLGYAVGAIFL. The Extracellular portion of the chain corresponds to 227–233; it reads NVPGNWR. A helical transmembrane segment spans residues 234–254; it reads YILGSSLLFSTIMFFGMLFLP. Topologically, residues 255–330 are cytoplasmic; it reads ESPRFLIHQK…RARRALVYAN (76 aa). A helical transmembrane segment spans residues 331 to 351; that stretch reads IMILLGQLTGVNAIMYYMSVL. Topologically, residues 352 to 363 are extracellular; that stretch reads MNQIGFDKKESN. A helical transmembrane segment spans residues 364 to 384; it reads YMSLVGGGSLLLGTIPAIFLM. Over 385–390 the chain is Cytoplasmic; that stretch reads ERFGRR. The chain crosses the membrane as a helical span at residues 391-411; the sequence is FWAITMLPGFFIGLVLIGVSY. Residues 412–426 lie on the Extracellular side of the membrane; it reads QFDVETQLQTVEGLY. The helical transmembrane segment at 427-447 threads the bilayer; that stretch reads LSGLIIYMGFFGSYACLTWVV. Over 448–465 the chain is Cytoplasmic; sequence PSEVYPTYLRSYGMTTSD. A helical transmembrane segment spans residues 466 to 486; that stretch reads ALLFLASFIVTYNFTAMQNAM. Residues 487–490 lie on the Extracellular side of the membrane; sequence GKTG. Residues 491–511 traverse the membrane as a helical segment; sequence LALGFYGGIAFIGEIYQIFFM. At 512–574 the chain is on the cytoplasmic side; that stretch reads PETKNKTLEE…PKDQVQVSHA (63 aa).

This sequence belongs to the major facilitator superfamily. Sugar transporter (TC 2.A.1.1) family.

It localises to the cell membrane. It catalyses the reaction myo-inositol(out) + H(+)(out) = myo-inositol(in) + H(+)(in). In terms of biological role, transporter for myo-inositol. Also appears to transport the polyketide mycotoxin fumonisin B1 (FB1). Does not appear to transport hexose sugars. In Gibberella moniliformis (strain M3125 / FGSC 7600) (Maize ear and stalk rot fungus), this protein is Myo-inositol transporter FST1.